Reading from the N-terminus, the 279-residue chain is Energy-coupling factor transporter ATP-binding protein EcfA1 (279 aa).

The ABC transporter domain maps to 5–240 (ITVNNLFFKY…GNRLISLGLD (236 aa)). 40–47 (GHNGSGKS) lines the ATP pocket.

The protein belongs to the ABC transporter superfamily. Energy-coupling factor EcfA family. In terms of assembly, forms a stable energy-coupling factor (ECF) transporter complex composed of 2 membrane-embedded substrate-binding proteins (S component), 2 ATP-binding proteins (A component) and 2 transmembrane proteins (T component).

Its subcellular location is the cell membrane. Functionally, ATP-binding (A) component of a common energy-coupling factor (ECF) ABC-transporter complex. Unlike classic ABC transporters this ECF transporter provides the energy necessary to transport a number of different substrates. This is Energy-coupling factor transporter ATP-binding protein EcfA1 from Streptococcus agalactiae serotype Ia (strain ATCC 27591 / A909 / CDC SS700).